The sequence spans 226 residues: Enolase-phosphatase E1 (226 aa).

This sequence belongs to the HAD-like hydrolase superfamily. MasA/MtnC family. Monomer. Mg(2+) is required as a cofactor.

It carries out the reaction 5-methylsulfanyl-2,3-dioxopentyl phosphate + H2O = 1,2-dihydroxy-5-(methylsulfanyl)pent-1-en-3-one + phosphate. It participates in amino-acid biosynthesis; L-methionine biosynthesis via salvage pathway; L-methionine from S-methyl-5-thio-alpha-D-ribose 1-phosphate: step 3/6. It functions in the pathway amino-acid biosynthesis; L-methionine biosynthesis via salvage pathway; L-methionine from S-methyl-5-thio-alpha-D-ribose 1-phosphate: step 4/6. Bifunctional enzyme that catalyzes the enolization of 2,3-diketo-5-methylthiopentyl-1-phosphate (DK-MTP-1-P) into the intermediate 2-hydroxy-3-keto-5-methylthiopentenyl-1-phosphate (HK-MTPenyl-1-P), which is then dephosphorylated to form the acireductone 1,2-dihydroxy-3-keto-5-methylthiopentene (DHK-MTPene). The sequence is that of Enolase-phosphatase E1 from Shewanella putrefaciens (strain CN-32 / ATCC BAA-453).